The primary structure comprises 475 residues: 3-isopropylmalate dehydratase large subunit (475 aa).

Residues C353, C414, and C417 each coordinate [4Fe-4S] cluster.

The protein belongs to the aconitase/IPM isomerase family. LeuC type 1 subfamily. As to quaternary structure, heterodimer of LeuC and LeuD. The cofactor is [4Fe-4S] cluster.

It catalyses the reaction (2R,3S)-3-isopropylmalate = (2S)-2-isopropylmalate. It functions in the pathway amino-acid biosynthesis; L-leucine biosynthesis; L-leucine from 3-methyl-2-oxobutanoate: step 2/4. In terms of biological role, catalyzes the isomerization between 2-isopropylmalate and 3-isopropylmalate, via the formation of 2-isopropylmaleate. The polypeptide is 3-isopropylmalate dehydratase large subunit (Marinomonas sp. (strain MWYL1)).